Reading from the N-terminus, the 198-residue chain is MKIKNAEFITSAAKTADYPAGNIPEVALAGRSNVGKSSLLNRLVNRKSLARISSTPGRTRLINFFLVNGLFRLVDLPGYGYAKVSARERQGWRRMVEEYLKTRENLKGVVLLVDSRHPPTVLDVQMYEWLKYQGIPAAVAATKADKISRSKRAQSLKVIREVLNLTAKEPLVFFSAETSEGREEMLEVIGRWVGLSGR.

Residues 22–195 (NIPEVALAGR…LEVIGRWVGL (174 aa)) form the EngB-type G domain. GTP contacts are provided by residues 30–37 (GRSNVGKS), 57–61 (GRTRL), 75–78 (DLPG), 142–145 (TKAD), and 174–176 (FSA). The Mg(2+) site is built by S37 and T59.

It belongs to the TRAFAC class TrmE-Era-EngA-EngB-Septin-like GTPase superfamily. EngB GTPase family. Mg(2+) is required as a cofactor.

In terms of biological role, necessary for normal cell division and for the maintenance of normal septation. The protein is Probable GTP-binding protein EngB of Pelotomaculum thermopropionicum (strain DSM 13744 / JCM 10971 / SI).